The sequence spans 224 residues: Non-structural protein V (224 aa).

The span at 55 to 65 (KNIQYPTTSHQ) shows a compositional bias: polar residues. Disordered stretches follow at residues 55 to 90 (KNIQ…GTGG) and 145 to 172 (TSTP…GHRR). The Zn(2+) site is built by His-170, Cys-189, Cys-193, Cys-205, Cys-207, Cys-210, Cys-214, and Cys-217.

Belongs to the paramyxoviruses V protein family. In terms of assembly, interacts with host IFIH1/MDA5 and DHX58/LGP2. Forms with host DDB1, CUL4A, STAT1, STAT2 and STAT3 the mumps virus V-dependent complex (VDC).

The protein resides in the virion. It localises to the host cytoplasm. Its function is as follows. Plays an essential role in the inhibition of host immune response. Prevents the establishment of cellular antiviral state by blocking interferon-alpha/beta (IFN-alpha/beta) production and signaling pathway. Interacts with host IFIH1/MDA5 and DHX58/LGP2 to inhibit the transduction pathway involved in the activation of IFN-beta promoter, thus protecting the virus against cell antiviral state. Blocks the type I and II interferon signaling pathways by interacting with host STAT1, STAT2 and STAT3, and mediating their ubiquitination and subsequent proteasomal degradation. This chain is Non-structural protein V, found in Mumps virus genotype B (strain Miyahara vaccine) (MuV).